The sequence spans 454 residues: GTPase Der (454 aa).

2 consecutive EngA-type G domains span residues Pro-3–Glu-167 and Met-181–Met-354. GTP contacts are provided by residues Gly-9–Ser-16, Asp-56–Phe-60, Asn-119–Glu-122, Gly-187–Ser-194, Asp-234–Leu-238, and Asn-299–Asp-302. One can recognise a KH-like domain in the interval Ala-355 to Lys-439.

The protein belongs to the TRAFAC class TrmE-Era-EngA-EngB-Septin-like GTPase superfamily. EngA (Der) GTPase family. Associates with the 50S ribosomal subunit.

GTPase that plays an essential role in the late steps of ribosome biogenesis. This is GTPase Der from Polynucleobacter asymbioticus (strain DSM 18221 / CIP 109841 / QLW-P1DMWA-1) (Polynucleobacter necessarius subsp. asymbioticus).